Consider the following 800-residue polypeptide: Phenylalanine--tRNA ligase beta subunit (800 aa).

Residues 39-154 (TKDIKNLVVG…ESQVPGTDAL (116 aa)) form the tRNA-binding domain. The B5 domain occupies 408-483 (AFITPIDITA…RIYGYDDIPS (76 aa)). Asp-461, Asp-467, Glu-470, and Glu-471 together coordinate Mg(2+). Residues 708-800 (PRFPGMSRDI…ALIEQGAVIR (93 aa)) enclose the FDX-ACB domain.

This sequence belongs to the phenylalanyl-tRNA synthetase beta subunit family. Type 1 subfamily. Tetramer of two alpha and two beta subunits. It depends on Mg(2+) as a cofactor.

It is found in the cytoplasm. It carries out the reaction tRNA(Phe) + L-phenylalanine + ATP = L-phenylalanyl-tRNA(Phe) + AMP + diphosphate + H(+). The protein is Phenylalanine--tRNA ligase beta subunit of Staphylococcus aureus.